An 859-amino-acid chain; its full sequence is MAAAMVAAVHGVGRQDRSSPGGGGAPQVDTGKYVRYTPEQVEALERVYGECPKPSSLRRQQLIRECPILSNIEPKQIKVWFQNRRCREKQRKEASRLQTVNRKLTAMNKLLMEENDRLQKQVSRLVYENGYMRQQLHNPSVATTDTSCESVVTSGQHHQQQNPAATRPQRDANNPAGLLAIAEETLAEFLSKATGTAVDWVQMVGMKPGPDSIGIIAVSHNCSGVAARACGLVSLEPTKVAEILKDRPSWYRDCRCVDVLHVIPTGNGGTIELIYMQTYAPTTLAAPRDFWILRYTSGLEDGSLVICERSLTQSTGGPSGPNTPNFVRAEVLPSGYLIRPCEGGGSMIHIVDHVDLDAWSVPEVLRPLYESPKILAQKMTIAALRHIRQIAHESSGEMPYGGGRQPAVLRTFSQRLSRGFNDAVNGFPDDGWSLMSSDGAEDVTIAFNSSPNKLVGSHVNSSQLFSAIGGGILCAKASMLLQNVPPALLVRFLREHRSEWADPGVDAYSAAALRASPYAVPGLRAGGFMGSQVILPLAHTLEHEEFLEVIRLEGHSLCHDEVVLSRDMYLLQLCSGVDENAAGACAQLVFAPIDESFADDAPLLPSGFRVIPLDGKTDAPSATRTLDLASTLEVGSGGTTRASSDTSSTCNTRSVLTIAFQFSYENHLRESVAAMARQYVRTVVASVQRVAMAIAPSRLGGQIETKNPPGSPEAHTLARWIGRSYRFHTGADLLRTDSQSTDSSLKAMWQHSDSIMCCSLKAAPVFTFANQAGLDMLETTLIALQDISLEKILDDDGRKALCTEFPKIMQQGFAYLPGGVCVSSMGRPVSYEQAVAWKVLSDDDTPHCLAFMFVNWSFV.

Positions 7–31 are disordered; it reads AAVHGVGRQDRSSPGGGGAPQVDTG. Positions 29 to 92 form a DNA-binding region, homeobox; the sequence is DTGKYVRYTP…NRRCREKQRK (64 aa). Residues 100–129 adopt a coiled-coil conformation; the sequence is VNRKLTAMNKLLMEENDRLQKQVSRLVYEN. Residues 146–164 show a composition bias toward polar residues; the sequence is TSCESVVTSGQHHQQQNPA. The disordered stretch occupies residues 146–172; that stretch reads TSCESVVTSGQHHQQQNPAATRPQRDA. In terms of domain architecture, START spans 171 to 393; the sequence is DANNPAGLLA…LRHIRQIAHE (223 aa).

It belongs to the HD-ZIP homeobox family. Class III subfamily. Expressed in seedlings, roots, stems, leaf sheaths and blades and panicles.

It localises to the nucleus. Functionally, probable transcription factor. The protein is Homeobox-leucine zipper protein HOX32 (HOX32) of Oryza sativa subsp. japonica (Rice).